A 111-amino-acid polypeptide reads, in one-letter code: Denmotoxin (111 aa).

Positions 1–19 (MKTLLLAVAVVAFVCLGSA) are cleaved as a signal peptide. A propeptide spanning residues 20-34 (DQLGLGRQQIDWGQG) is cleaved from the precursor. Position 35 is a pyrrolidone carboxylic acid (Q35). 5 disulfide bridges follow: C44/C68, C47/C55, C61/C87, C91/C102, and C103/C108.

As to quaternary structure, monomer. In terms of tissue distribution, expressed by the venom gland.

The protein localises to the secreted. In terms of biological role, this bird-specific postsynaptic neurotoxin irreversibly binds and inhibits the chick muscle alpha-1-beta-1-gamma-delta (CHRNA1-CHRNB1-CHRNG-CHNRD) nicotinic acetylcholine receptor (nAChR) 100-fold more compared with the mouse receptor. The weak binding to mouse receptor is reversible. This chain is Denmotoxin, found in Boiga dendrophila (Mangrove snake).